We begin with the raw amino-acid sequence, 362 residues long: Aminomethyltransferase (362 aa).

It belongs to the GcvT family. The glycine cleavage system is composed of four proteins: P, T, L and H.

It catalyses the reaction N(6)-[(R)-S(8)-aminomethyldihydrolipoyl]-L-lysyl-[protein] + (6S)-5,6,7,8-tetrahydrofolate = N(6)-[(R)-dihydrolipoyl]-L-lysyl-[protein] + (6R)-5,10-methylene-5,6,7,8-tetrahydrofolate + NH4(+). The glycine cleavage system catalyzes the degradation of glycine. In Listeria welshimeri serovar 6b (strain ATCC 35897 / DSM 20650 / CCUG 15529 / CIP 8149 / NCTC 11857 / SLCC 5334 / V8), this protein is Aminomethyltransferase.